A 397-amino-acid polypeptide reads, in one-letter code: 1-carboxy-3-chloro-3,4-dihydroxycyclo hexa-1,5-diene dehydrogenase (397 aa).

To P.putida PHT4.

The protein is 1-carboxy-3-chloro-3,4-dihydroxycyclo hexa-1,5-diene dehydrogenase (cbaC) of Comamonas testosteroni (Pseudomonas testosteroni).